A 399-amino-acid polypeptide reads, in one-letter code: Tryptophan synthase beta chain (399 aa).

Residue K90 is modified to N6-(pyridoxal phosphate)lysine.

The protein belongs to the TrpB family. Tetramer of two alpha and two beta chains. Requires pyridoxal 5'-phosphate as cofactor.

The enzyme catalyses (1S,2R)-1-C-(indol-3-yl)glycerol 3-phosphate + L-serine = D-glyceraldehyde 3-phosphate + L-tryptophan + H2O. It functions in the pathway amino-acid biosynthesis; L-tryptophan biosynthesis; L-tryptophan from chorismate: step 5/5. Functionally, the beta subunit is responsible for the synthesis of L-tryptophan from indole and L-serine. This is Tryptophan synthase beta chain from Lactiplantibacillus plantarum (strain ATCC BAA-793 / NCIMB 8826 / WCFS1) (Lactobacillus plantarum).